The following is a 94-amino-acid chain: Large ribosomal subunit protein uL23 (94 aa).

The protein belongs to the universal ribosomal protein uL23 family. As to quaternary structure, part of the 50S ribosomal subunit. Contacts protein L29, and trigger factor when it is bound to the ribosome.

Functionally, one of the early assembly proteins it binds 23S rRNA. One of the proteins that surrounds the polypeptide exit tunnel on the outside of the ribosome. Forms the main docking site for trigger factor binding to the ribosome. The sequence is that of Large ribosomal subunit protein uL23 from Dehalococcoides mccartyi (strain ATCC BAA-2100 / JCM 16839 / KCTC 5957 / BAV1).